Reading from the N-terminus, the 570-residue chain is Proline--tRNA ligase (570 aa).

It belongs to the class-II aminoacyl-tRNA synthetase family. ProS type 1 subfamily. Homodimer.

It localises to the cytoplasm. The enzyme catalyses tRNA(Pro) + L-proline + ATP = L-prolyl-tRNA(Pro) + AMP + diphosphate. Catalyzes the attachment of proline to tRNA(Pro) in a two-step reaction: proline is first activated by ATP to form Pro-AMP and then transferred to the acceptor end of tRNA(Pro). As ProRS can inadvertently accommodate and process non-cognate amino acids such as alanine and cysteine, to avoid such errors it has two additional distinct editing activities against alanine. One activity is designated as 'pretransfer' editing and involves the tRNA(Pro)-independent hydrolysis of activated Ala-AMP. The other activity is designated 'posttransfer' editing and involves deacylation of mischarged Ala-tRNA(Pro). The misacylated Cys-tRNA(Pro) is not edited by ProRS. The sequence is that of Proline--tRNA ligase from Neisseria meningitidis serogroup B (strain ATCC BAA-335 / MC58).